The sequence spans 80 residues: UPF0512 protein Q (80 aa).

This sequence belongs to the UPF0512 family.

In Dictyostelium discoideum (Social amoeba), this protein is UPF0512 protein Q.